The chain runs to 403 residues: Phosphoglycerate kinase (403 aa).

Substrate is bound by residues 22–24, arginine 37, 60–63, arginine 119, and arginine 156; these read DLN and HLGR. ATP contacts are provided by residues lysine 206, glycine 302, glutamate 333, and 359-362; that span reads GGDS.

The protein belongs to the phosphoglycerate kinase family. In terms of assembly, monomer.

Its subcellular location is the cytoplasm. It catalyses the reaction (2R)-3-phosphoglycerate + ATP = (2R)-3-phospho-glyceroyl phosphate + ADP. It functions in the pathway carbohydrate degradation; glycolysis; pyruvate from D-glyceraldehyde 3-phosphate: step 2/5. In Streptomyces coelicolor (strain ATCC BAA-471 / A3(2) / M145), this protein is Phosphoglycerate kinase (pgk).